A 144-amino-acid polypeptide reads, in one-letter code: MAESNNRMVVSLEDLLAQADALRKEIDALQKLRDEIAESLNAARSAKEAINLIKGQGKDLLLSADRRGFVLLKVTEIPSSKVLVNLGLGYYAEIEPDQASKILDEREEQLNKSLQDITARLNNAVNAYTQIAEILNRAQQQQGE.

It belongs to the prefoldin alpha subunit family. Heterohexamer of two alpha and four beta subunits.

The protein resides in the cytoplasm. Functionally, molecular chaperone capable of stabilizing a range of proteins. Seems to fulfill an ATP-independent, HSP70-like function in archaeal de novo protein folding. This Metallosphaera sedula (strain ATCC 51363 / DSM 5348 / JCM 9185 / NBRC 15509 / TH2) protein is Prefoldin subunit alpha.